A 368-amino-acid polypeptide reads, in one-letter code: Agmatine deiminase (368 aa).

Cys-357 functions as the Amidino-cysteine intermediate in the catalytic mechanism.

The protein belongs to the agmatine deiminase family. Homodimer.

The enzyme catalyses agmatine + H2O = N-carbamoylputrescine + NH4(+). It participates in amine and polyamine biosynthesis; putrescine biosynthesis via agmatine pathway; N-carbamoylputrescine from agmatine: step 1/1. Mediates the hydrolysis of agmatine into N-carbamoylputrescine in the arginine decarboxylase (ADC) pathway of putrescine biosynthesis, a basic polyamine. This chain is Agmatine deiminase, found in Pseudomonas fluorescens (strain SBW25).